A 395-amino-acid chain; its full sequence is Calsequestrin-1 (395 aa).

Residues Met1–Gly28 form the signal peptide. Position 37 is a phosphotyrosine (Tyr37). Residue Ser75 is modified to Phosphoserine. Residue Thr118 is modified to Phosphothreonine. Ser210 is modified (phosphoserine). Asn344 carries an N-linked (GlcNAc...) asparagine glycan. Positions Glu376 to Asp395 are disordered.

This sequence belongs to the calsequestrin family. As to quaternary structure, monomer; increases in response to a depletion of intracellular calcium. Homodimer. Homotetramer and homopolymer. Can form linear homooligomers. Ca(2+) ions promote oligomerization. Interacts (via C-terminal end and preferentially with the monomeric form) with STIM1; this interaction increases in response to a depletion of intracellular calcium, decreases both STIM1 aggregation and clustering, interaction of STIM1 with ORAI1 and store-operated Ca(2+) entry (SOCE) activity. Interacts with ASPH and TRDN. N-glycosylated. In terms of tissue distribution, detected in skeletal muscle (at protein level). Detected in skeletal muscle.

Its subcellular location is the endoplasmic reticulum. It localises to the sarcoplasmic reticulum. The protein resides in the sarcoplasmic reticulum lumen. The protein localises to the mitochondrion matrix. It is found in the sarcoplasmic reticulum membrane. Its function is as follows. Calsequestrin is a high-capacity, moderate affinity, calcium-binding protein and thus acts as an internal calcium store in muscle. Calcium ions are bound by clusters of acidic residues at the protein surface, often at the interface between subunits. Can bind around 80 Ca(2+) ions. Regulates the release of lumenal Ca(2+) via the calcium release channel RYR1; this plays an important role in triggering muscle contraction. Negatively regulates store-operated Ca(2+) entry (SOCE) activity. The chain is Calsequestrin-1 (CASQ1) from Oryctolagus cuniculus (Rabbit).